We begin with the raw amino-acid sequence, 157 residues long: Dihydrofolate reductase type 6 (157 aa).

The region spanning 2–156 is the DHFR domain; sequence KISLMAAVSE…IDYTYQIWAK (155 aa).

The protein belongs to the dihydrofolate reductase family. In terms of assembly, homodimer.

The catalysed reaction is (6S)-5,6,7,8-tetrahydrofolate + NADP(+) = 7,8-dihydrofolate + NADPH + H(+). It functions in the pathway cofactor biosynthesis; tetrahydrofolate biosynthesis; 5,6,7,8-tetrahydrofolate from 7,8-dihydrofolate: step 1/1. Its function is as follows. Key enzyme in folate metabolism. Catalyzes an essential reaction for de novo glycine and purine synthesis, and for DNA precursor synthesis. This Proteus mirabilis protein is Dihydrofolate reductase type 6 (dhfrVI).